Reading from the N-terminus, the 178-residue chain is Large ribosomal subunit protein uL6 (178 aa).

It belongs to the universal ribosomal protein uL6 family. Part of the 50S ribosomal subunit.

This protein binds to the 23S rRNA, and is important in its secondary structure. It is located near the subunit interface in the base of the L7/L12 stalk, and near the tRNA binding site of the peptidyltransferase center. The polypeptide is Large ribosomal subunit protein uL6 (Limosilactobacillus reuteri (strain DSM 20016) (Lactobacillus reuteri)).